The following is a 194-amino-acid chain: GTP cyclohydrolase 1 (194 aa).

Zn(2+)-binding residues include Cys-83, His-86, and Cys-155.

It belongs to the GTP cyclohydrolase I family. As to quaternary structure, toroid-shaped homodecamer, composed of two pentamers of five dimers.

It catalyses the reaction GTP + H2O = 7,8-dihydroneopterin 3'-triphosphate + formate + H(+). Its pathway is cofactor biosynthesis; 7,8-dihydroneopterin triphosphate biosynthesis; 7,8-dihydroneopterin triphosphate from GTP: step 1/1. This is GTP cyclohydrolase 1 (folE) from Streptococcus pyogenes serotype M1.